A 1367-amino-acid polypeptide reads, in one-letter code: Insulin-like growth factor 1 receptor (1367 aa).

The N-terminal stretch at 1-30 (MKSGSGGGSPTSLWGLLFLSAALSLWPTSG) is a signal peptide. The cysteines at positions 33 and 52 are disulfide-linked. Residues asparagine 51, asparagine 102, and asparagine 135 are each glycosylated (N-linked (GlcNAc...) asparagine). Intrachain disulfides connect cysteine 150/cysteine 178, cysteine 182/cysteine 205, cysteine 192/cysteine 211, cysteine 215/cysteine 224, cysteine 219/cysteine 230, cysteine 231/cysteine 239, cysteine 235/cysteine 248, cysteine 251/cysteine 260, cysteine 264/cysteine 276, cysteine 282/cysteine 303, cysteine 307/cysteine 321, cysteine 324/cysteine 328, and cysteine 332/cysteine 353. N-linked (GlcNAc...) asparagine glycosylation occurs at asparagine 244. Asparagine 314 is a glycosylation site (N-linked (GlcNAc...) asparagine). Residues asparagine 417 and asparagine 438 are each glycosylated (N-linked (GlcNAc...) asparagine). Cysteine 455 and cysteine 488 are disulfide-bonded. 4 consecutive Fibronectin type-III domains span residues 491–609 (DVLH…TNAS), 610–708 (VPSI…TEAE), 735–828 (PERK…TMPA), and 834–927 (IPGP…VQAK). 9 N-linked (GlcNAc...) asparagine glycosylation sites follow: asparagine 534, asparagine 607, asparagine 622, asparagine 640, asparagine 747, asparagine 756, asparagine 764, asparagine 900, and asparagine 913. Over 741-935 (DVMQVANTTM…AKTGYENFIH (195 aa)) the chain is Extracellular. A helical membrane pass occupies residues 936 to 959 (LIIALPVAVLLIVGGLVIMLYVFH). Topologically, residues 960–1367 (RKRNNSRLGN…ALPLPQSSTC (408 aa)) are cytoplasmic. Positions 977–980 (NPEY) match the IRS1- and SHC1-binding motif. Tyrosine 980 carries the phosphotyrosine modification. A Protein kinase domain is found at 999–1274 (ITMSRELGQG…SIKEEMEPGF (276 aa)). Residues 1005 to 1013 (LGQGSFGMV) and lysine 1033 contribute to the ATP site. Catalysis depends on aspartate 1135, which acts as the Proton acceptor. 3 positions are modified to phosphotyrosine; by autocatalysis: tyrosine 1161, tyrosine 1165, and tyrosine 1166. Glycyl lysine isopeptide (Lys-Gly) (interchain with G-Cter in ubiquitin) cross-links involve residues lysine 1168 and lysine 1171. Position 1278 is a phosphoserine; by GSK3-beta (serine 1278). Serine 1282 carries the post-translational modification Phosphoserine. The tract at residues 1288–1367 (PEPEELDLEP…ALPLPQSSTC (80 aa)) is disordered. A compositionally biased stretch (acidic residues) spans 1290–1299 (PEELDLEPEN). Residues 1300-1316 (MESVPLDPSASSSSLPL) show a composition bias toward low complexity. A compositionally biased stretch (basic and acidic residues) spans 1317 to 1326 (PDRHSGHKAE).

Belongs to the protein kinase superfamily. Tyr protein kinase family. Insulin receptor subfamily. As to quaternary structure, tetramer of 2 alpha and 2 beta chains linked by disulfide bonds. The alpha chains contribute to the formation of the ligand-binding domain, while the beta chain carries the kinase domain. Interacts with PIK3R1 and with the PTB/PID domains of IRS1 and SHC1 in vitro when autophosphorylated on tyrosine residues. Forms a hybrid receptor with INSR, the hybrid is a tetramer consisting of 1 alpha chain and 1 beta chain of INSR and 1 alpha chain and 1 beta chain of IGF1R. Interacts with ARRB1 and ARRB2. Interacts with GRB10. Interacts with RACK1. Interacts with SOCS1, SOCS2 and SOCS3. Interacts with 14-3-3 proteins. Interacts with NMD2. Interacts with MAP3K5. Interacts with STAT3. Found in a ternary complex with IGF1 and ITGAV:ITGB3 or ITGA6:ITGB4. Interacts (nascent precursor form) with ZFAND2B. In terms of assembly, (Microbial infection) Interacts with human respiratory syncytial virus (HRSV) fusion glycoprotein F1/F2 heterodimer. Post-translationally, autophosphorylated on tyrosine residues in response to ligand binding. Autophosphorylation occurs in trans, i.e. one subunit of the dimeric receptor phosphorylates tyrosine residues on the other subunit. Autophosphorylation occurs in a sequential manner; Tyr-1165 is predominantly phosphorylated first, followed by phosphorylation of Tyr-1161 and Tyr-1166. While every single phosphorylation increases kinase activity, all three tyrosine residues in the kinase activation loop (Tyr-1165, Tyr-1161 and Tyr-1166) have to be phosphorylated for optimal activity. Can be autophosphorylated at additional tyrosine residues (in vitro). Autophosphorylated is followed by phosphorylation of juxtamembrane tyrosines and C-terminal serines. May also be phosphorylated at Tyr-1161 and Tyr-1166 by mTORC2. Phosphorylation of Tyr-980 is required for IRS1- and SHC1-binding. Phosphorylation of Ser-1278 by GSK-3beta restrains kinase activity and promotes cell surface expression, it requires a priming phosphorylation at Ser-1282. Dephosphorylated by PTPN1. Polyubiquitinated at Lys-1168 and Lys-1171 through both 'Lys-48' and 'Lys-29' linkages, promoting receptor endocytosis and subsequent degradation by the proteasome. Ubiquitination is facilitated by pre-existing phosphorylation. In terms of processing, sumoylated with SUMO1. Post-translationally, controlled by regulated intramembrane proteolysis (RIP). Undergoes metalloprotease-dependent constitutive ectodomain shedding to produce a membrane-anchored 52 kDa C-Terminal fragment which is further processed by presenilin gamma-secretase to yield an intracellular 50 kDa fragment. Found as a hybrid receptor with INSR in muscle, heart, kidney, adipose tissue, skeletal muscle, hepatoma, fibroblasts, spleen and placenta (at protein level). Expressed in a variety of tissues. Overexpressed in tumors, including melanomas, cancers of the colon, pancreas prostate and kidney.

The protein localises to the cell membrane. The catalysed reaction is L-tyrosyl-[protein] + ATP = O-phospho-L-tyrosyl-[protein] + ADP + H(+). Activated by autophosphorylation at Tyr-1165, Tyr-1161 and Tyr-1166 on the kinase activation loop; phosphorylation at all three tyrosine residues is required for optimal kinase activity. Inhibited by MSC1609119A-1, BMS-754807, PQIP, benzimidazole pyridinone, isoquinolinedione, bis-azaindole, 3-cyanoquinoline, 2,4-bis-arylamino-1,3-pyrimidine, pyrrolopyrimidine, pyrrole-5-carboxaldehyde, picropodophyllin (PPP), tyrphostin derivatives. While most inhibitors bind to the ATP binding pocket, MSC1609119A-1 functions as allosteric inhibitor and binds close to the DFG motif and the activation loop. Functionally, receptor tyrosine kinase which mediates actions of insulin-like growth factor 1 (IGF1). Binds IGF1 with high affinity and IGF2 and insulin (INS) with a lower affinity. The activated IGF1R is involved in cell growth and survival control. IGF1R is crucial for tumor transformation and survival of malignant cell. Ligand binding activates the receptor kinase, leading to receptor autophosphorylation, and tyrosines phosphorylation of multiple substrates, that function as signaling adapter proteins including, the insulin-receptor substrates (IRS1/2), Shc and 14-3-3 proteins. Phosphorylation of IRSs proteins lead to the activation of two main signaling pathways: the PI3K-AKT/PKB pathway and the Ras-MAPK pathway. The result of activating the MAPK pathway is increased cellular proliferation, whereas activating the PI3K pathway inhibits apoptosis and stimulates protein synthesis. Phosphorylated IRS1 can activate the 85 kDa regulatory subunit of PI3K (PIK3R1), leading to activation of several downstream substrates, including protein AKT/PKB. AKT phosphorylation, in turn, enhances protein synthesis through mTOR activation and triggers the antiapoptotic effects of IGFIR through phosphorylation and inactivation of BAD. In parallel to PI3K-driven signaling, recruitment of Grb2/SOS by phosphorylated IRS1 or Shc leads to recruitment of Ras and activation of the ras-MAPK pathway. In addition to these two main signaling pathways IGF1R signals also through the Janus kinase/signal transducer and activator of transcription pathway (JAK/STAT). Phosphorylation of JAK proteins can lead to phosphorylation/activation of signal transducers and activators of transcription (STAT) proteins. In particular activation of STAT3, may be essential for the transforming activity of IGF1R. The JAK/STAT pathway activates gene transcription and may be responsible for the transforming activity. JNK kinases can also be activated by the IGF1R. IGF1 exerts inhibiting activities on JNK activation via phosphorylation and inhibition of MAP3K5/ASK1, which is able to directly associate with the IGF1R. Its function is as follows. When present in a hybrid receptor with INSR, binds IGF1. PubMed:12138094 shows that hybrid receptors composed of IGF1R and INSR isoform Long are activated with a high affinity by IGF1, with low affinity by IGF2 and not significantly activated by insulin, and that hybrid receptors composed of IGF1R and INSR isoform Short are activated by IGF1, IGF2 and insulin. In contrast, PubMed:16831875 shows that hybrid receptors composed of IGF1R and INSR isoform Long and hybrid receptors composed of IGF1R and INSR isoform Short have similar binding characteristics, both bind IGF1 and have a low affinity for insulin. The polypeptide is Insulin-like growth factor 1 receptor (IGF1R) (Homo sapiens (Human)).